A 741-amino-acid chain; its full sequence is MNRVTTESIASTAILVVMVFLFSWRSIEAANVSYDHRSLTIGNRRQLIISAAIHYPRSVPAMWPSLVQTAKEGGCNAIESYVFWNGHEPSPGKYYFGGRYNIVKFIKIVQQAGMHMILRIGPFVAAEWNYGGVPVWLHYVPGTVFRADNEPWKHYMESFTTYIVNLLKQEKLFAPQGGPIILSQVENEYGYYEKDYGEGGKRYAQWSASMAVSQNIGVPWMMCQQWDAPPTVISTCNGFYCDQFTPNTPDKPKIWTENWPGWFKTFGGRDPHRPAEDVAYSVARFFGKGGSVHNYYMYHGGTNFGRTSGGPFITTSYDYEAPIDEYGLPRLPKWGHLKDLHKAIMLSENLLISGEHQNFTLGHSLEADVYTDSSGTCAAFLSNLDDKNDKAVMFRNTSYHLPAWSVSILPDCKTEVFNTAKVTSKSSKVEMLPEDLKSSSGLKWEVFSEKPGIWGAADFVKNELVDHINTTKDTTDYLWYTTSITVSENEAFLKKGSSPVLFIESKGHTLHVFINKEYLGTATGNGTHVPFKLKKPVALKAGENNIDLLSMTVGLANAGSFYEWVGAGLTSVSIKGFNKGTLNLTNSKWSYKLGVEGEHLELFKPGNSGAVKWTVTTKPPKKQPLTWYKVVIEPPSGSEPVGLDMISMGKGMAWLNGEEIGRYWPRIARKNSPNDECVKECDYRGKFMPDKCLTGCGEPSQRWYHVPRSWFKSSGNELVIFEEKGGNPMKIKLSKRKVSVV.

An N-terminal signal peptide occupies residues 1–29 (MNRVTTESIASTAILVVMVFLFSWRSIEA). Asn-31 carries N-linked (GlcNAc...) asparagine glycosylation. Glu-188 functions as the Proton donor in the catalytic mechanism. Glu-257 (nucleophile) is an active-site residue. Asn-358, Asn-396, Asn-469, Asn-525, and Asn-583 each carry an N-linked (GlcNAc...) asparagine glycan.

The protein belongs to the glycosyl hydrolase 35 family. In terms of tissue distribution, ubiquitous.

It localises to the secreted. It is found in the extracellular space. The protein localises to the apoplast. It catalyses the reaction Hydrolysis of terminal non-reducing beta-D-galactose residues in beta-D-galactosides.. The protein is Beta-galactosidase 10 (BGAL10) of Arabidopsis thaliana (Mouse-ear cress).